The sequence spans 82 residues: ATP synthase subunit c, chloroplastic (82 aa).

The next 2 helical transmembrane spans lie at 4–24 (IISAASVIAAGLAIGLAAIGP) and 57–77 (LAFMEALTIYGLVVALALLFA).

It belongs to the ATPase C chain family. F-type ATPases have 2 components, F(1) - the catalytic core - and F(0) - the membrane proton channel. F(1) has five subunits: alpha(3), beta(3), gamma(1), delta(1), epsilon(1). F(0) has four main subunits: a(1), b(1), b'(1) and c(10-14). The alpha and beta chains form an alternating ring which encloses part of the gamma chain. F(1) is attached to F(0) by a central stalk formed by the gamma and epsilon chains, while a peripheral stalk is formed by the delta, b and b' chains.

It is found in the plastid. It localises to the chloroplast thylakoid membrane. F(1)F(0) ATP synthase produces ATP from ADP in the presence of a proton or sodium gradient. F-type ATPases consist of two structural domains, F(1) containing the extramembraneous catalytic core and F(0) containing the membrane proton channel, linked together by a central stalk and a peripheral stalk. During catalysis, ATP synthesis in the catalytic domain of F(1) is coupled via a rotary mechanism of the central stalk subunits to proton translocation. Functionally, key component of the F(0) channel; it plays a direct role in translocation across the membrane. A homomeric c-ring of between 10-14 subunits forms the central stalk rotor element with the F(1) delta and epsilon subunits. The chain is ATP synthase subunit c, chloroplastic from Thalassiosira pseudonana (Marine diatom).